A 238-amino-acid chain; its full sequence is Ribonuclease PH (238 aa).

Residues Arg86 and 124–126 (GTR) contribute to the phosphate site.

This sequence belongs to the RNase PH family. In terms of assembly, homohexameric ring arranged as a trimer of dimers.

The catalysed reaction is tRNA(n+1) + phosphate = tRNA(n) + a ribonucleoside 5'-diphosphate. Its function is as follows. Phosphorolytic 3'-5' exoribonuclease that plays an important role in tRNA 3'-end maturation. Removes nucleotide residues following the 3'-CCA terminus of tRNAs; can also add nucleotides to the ends of RNA molecules by using nucleoside diphosphates as substrates, but this may not be physiologically important. Probably plays a role in initiation of 16S rRNA degradation (leading to ribosome degradation) during starvation. The sequence is that of Ribonuclease PH from Photobacterium profundum (strain SS9).